A 389-amino-acid chain; its full sequence is MIVEPKFRGFICTTSHPIGCKKNVENQIEYVKENGKIEGAKRVLVLGASTGYGLASAIVASEACDAEVLGVSFEREAKGKRTASAGWYNIESLKKFVEGEGKKFISVNGDAFSNEVKSEVIDLIKENMGKVDLVIYSLAAPKRKDPVSGEVYSSCLKTVGAPFTSKTLDFHTGEIQNITINPATEEEIEGTRKVMGGEDWMLWIEALKEANVLENGVKTIAYSYIGPEVTYPIYREGTIGRAKNDLEKTAGEITKVLKSLNGEGYISVNKALVTQASSAIPIVSLYISILYKVMKEKGTHEGCIEQIYRMFKELYEGNLNLDSENRIRIDDLEMAEDVQKAIEEIWPQITSENVFELSDAEDFKKEFFKLFGFGLEGVDYSEDVDITTV.

NAD(+) contacts are provided by residues 47–52 (GASTGY), 73–74 (FE), 110–111 (DA), and 138–139 (LA). Tyr-224 is a substrate binding site. Catalysis depends on Tyr-234, which acts as the Proton donor. Residues Lys-243 and 272 to 274 (LVT) each bind NAD(+).

This sequence belongs to the TER reductase family. Monomer.

The catalysed reaction is a 2,3-saturated acyl-CoA + NAD(+) = a (2E)-enoyl-CoA + NADH + H(+). It participates in lipid metabolism; fatty acid biosynthesis. Its function is as follows. Involved in the fatty acid synthesis (FAS II). Catalyzes the reduction of a carbon-carbon double bond in an enoyl moiety that is covalently linked to a coenzyme A (CoA). This chain is Trans-2-enoyl-CoA reductase [NADH], found in Clostridium perfringens (strain 13 / Type A).